We begin with the raw amino-acid sequence, 564 residues long: Adenine deaminase (564 aa).

It belongs to the metallo-dependent hydrolases superfamily. Adenine deaminase family. The cofactor is Mn(2+).

The catalysed reaction is adenine + H2O + H(+) = hypoxanthine + NH4(+). The polypeptide is Adenine deaminase (Methylobacterium sp. (strain 4-46)).